A 1130-amino-acid chain; its full sequence is Putative protein tag-278 (1130 aa).

Disordered regions lie at residues methionine 1–asparagine 92, valine 104–arginine 129, and asparagine 974–phenylalanine 1130. 2 coiled-coil regions span residues alanine 121–lysine 779 and glutamate 805–lysine 1061. Residues arginine 983–histidine 993 are compositionally biased toward basic and acidic residues. The segment covering serine 999–serine 1011 has biased composition (polar residues). Basic and acidic residues-rich tracts occupy residues methionine 1013–proline 1057 and arginine 1068–asparagine 1081. A compositionally biased stretch (low complexity) spans leucine 1082–serine 1095. Positions threonine 1116–phenylalanine 1130 are enriched in basic and acidic residues.

This chain is Putative protein tag-278 (tag-278), found in Caenorhabditis elegans.